Here is a 333-residue protein sequence, read N- to C-terminus: NADH-quinone oxidoreductase subunit H (333 aa).

8 helical membrane passes run 15–35, 88–108, 117–137, 159–179, 191–211, 239–259, 274–296, and 313–333; these read FFIF…FVTY, FILA…VIPF, IGVG…GVVT, ISYE…AGSL, VWYI…AVAE, WAFF…LITV, IPGA…WFRV, and VLLP…ELFF.

This sequence belongs to the complex I subunit 1 family. NDH-1 is composed of 14 different subunits. Subunits NuoA, H, J, K, L, M, N constitute the membrane sector of the complex.

It is found in the cell membrane. It catalyses the reaction a quinone + NADH + 5 H(+)(in) = a quinol + NAD(+) + 4 H(+)(out). In terms of biological role, NDH-1 shuttles electrons from NADH, via FMN and iron-sulfur (Fe-S) centers, to quinones in the respiratory chain. The immediate electron acceptor for the enzyme in this species is believed to be ubiquinone. Couples the redox reaction to proton translocation (for every two electrons transferred, four hydrogen ions are translocated across the cytoplasmic membrane), and thus conserves the redox energy in a proton gradient. This subunit may bind ubiquinone. This Bacillus anthracis (strain A0248) protein is NADH-quinone oxidoreductase subunit H.